We begin with the raw amino-acid sequence, 240 residues long: Phosphoribosylaminoimidazole-succinocarboxamide synthase (240 aa).

The protein belongs to the SAICAR synthetase family.

It carries out the reaction 5-amino-1-(5-phospho-D-ribosyl)imidazole-4-carboxylate + L-aspartate + ATP = (2S)-2-[5-amino-1-(5-phospho-beta-D-ribosyl)imidazole-4-carboxamido]succinate + ADP + phosphate + 2 H(+). The protein operates within purine metabolism; IMP biosynthesis via de novo pathway; 5-amino-1-(5-phospho-D-ribosyl)imidazole-4-carboxamide from 5-amino-1-(5-phospho-D-ribosyl)imidazole-4-carboxylate: step 1/2. The polypeptide is Phosphoribosylaminoimidazole-succinocarboxamide synthase (Wolbachia pipientis wMel).